The chain runs to 305 residues: Beta-carotene 3-hydroxylase, chloroplastic (305 aa).

The N-terminal 41 residues, 1 to 41 (MAFAMSSSLTLFQYQSFGKKPFFSRRRDFAGCSMMNPLVAR), are a transit peptide targeting the chloroplast. A run of 2 helical transmembrane segments spans residues 98 to 118 (YLVAAMASSLGFTFMAAAAVY) and 129 to 149 (AVPLTEMMGTFSLAVGSAVGM). The Fatty acid hydroxylase domain occupies 146–272 (AVGMEYWARW…KFNGVPYGLF (127 aa)). The Histidine box-1 motif lies at 157–162 (HRALWH). The short motif at 169 to 173 (HESHH) is the Histidine box-2 element. 2 helical membrane passes run 184–204 (DVFALINAFPAVALLAFGFFH) and 207–227 (FFSGLCFGAGLGITLYGMAYM). A Histidine box-3 motif is present at residues 230–235 (HDGLVH). The Histidine box-4 motif lies at 256-260 (HQIHH).

Belongs to the sterol desaturase family. As to quaternary structure, homodimer. In terms of tissue distribution, expressed in flower buds and lips. Detected in roots and leaves.

It is found in the plastid. Its subcellular location is the chloroplast membrane. The catalysed reaction is all-trans-beta-carotene + 4 reduced [2Fe-2S]-[ferredoxin] + 2 O2 + 4 H(+) = all-trans-zeaxanthin + 4 oxidized [2Fe-2S]-[ferredoxin] + 2 H2O. Its function is as follows. Nonheme diiron monooxygenase involved in the biosynthesis of xanthophylls. Specific for beta-ring hydroxylations of beta-carotene. Uses ferredoxin as an electron donor. The chain is Beta-carotene 3-hydroxylase, chloroplastic (BHY) from Oncidium hybrid cultivar (Orchid).